Here is a 576-residue protein sequence, read N- to C-terminus: Polyphenol oxidase 3 (576 aa).

6 residues coordinate Cu cation: His-61, His-85, His-94, His-259, His-263, and His-296. A cross-link (2'-(S-cysteinyl)-histidine (Cys-His)) is located at residues 83-85 (CTH). Residue His-263 participates in substrate binding. Positions 393 to 576 (FVTTQTENPA…ILDDIIHRVN (184 aa)) are cleaved as a propeptide — removed in mature form.

This sequence belongs to the tyrosinase family. Tetramer composed of two subunits of PPO3 (H subunits) and two subunits of the as yet uncharacterized product of ORF239342 (L subunits). Cu(2+) is required as a cofactor. In terms of processing, the C-ter is probably cleaved after Gly-392 since the mature active protein is smaller than the protein encoded by the gene.

The catalysed reaction is 2 L-dopa + O2 = 2 L-dopaquinone + 2 H2O. It catalyses the reaction L-tyrosine + O2 = L-dopaquinone + H2O. Copper-containing oxidase that catalyzes both the o-hydroxylation of monophenols and the subsequent oxidation of the resulting o-diphenols into reactive o-quinones, which evolve spontaneously to produce intermediates, which associate in dark brown pigments. Involved in the initial step of melanin synthesis. Melanins constitute a mechanism of defense and resistance to stress such as UV radiations, free radicals, gamma rays, dehydratation and extreme temperatures, and contribute to the fungal cell-wall resistance against hydrolytic enzymes in avoiding cellular lysis. Fungal pigments are also involved in the formation and stability of spores. This chain is Polyphenol oxidase 3 (PPO3), found in Agaricus bisporus (White button mushroom).